We begin with the raw amino-acid sequence, 294 residues long: MTSTESSQPADRYVVVGNPVAHSRSPFIHAAFARQTGEAVEYGRLEAPLDAFADTMRAFLAEGGYGFNVTVPFKLQAYDLADRLTPRAEAAGAVNTMWIEDGLIHGDNTDGIGLVRDIQDNLDTLLEDKRVLLLGAGGAAMGAMLPLIECRPSRIVVANRTASRASDMLEEFVEAADSFGVELWGGGLDALEQLSEDDVCDVVINASSSSLHGEVPPVPAFLLGDGVLAYDMMYGAEPTVFLQHAAQCGARTADGLGMLVEQAAEAFYIWRGVRPRTAPVLADLRAALQAERKG.

Residues 23-25 and Thr70 each bind shikimate; that span reads SRS. Lys74 functions as the Proton acceptor in the catalytic mechanism. Residues Asn95 and Asp110 each coordinate shikimate. NADP(+)-binding positions include 135-139, 159-164, and Met232; these read GAGGA and NRTASR. Tyr234 contributes to the shikimate binding site. Gly255 is a binding site for NADP(+).

It belongs to the shikimate dehydrogenase family. Homodimer.

The enzyme catalyses shikimate + NADP(+) = 3-dehydroshikimate + NADPH + H(+). Its pathway is metabolic intermediate biosynthesis; chorismate biosynthesis; chorismate from D-erythrose 4-phosphate and phosphoenolpyruvate: step 4/7. Involved in the biosynthesis of the chorismate, which leads to the biosynthesis of aromatic amino acids. Catalyzes the reversible NADPH linked reduction of 3-dehydroshikimate (DHSA) to yield shikimate (SA). The sequence is that of Shikimate dehydrogenase (NADP(+)) from Cupriavidus pinatubonensis (strain JMP 134 / LMG 1197) (Cupriavidus necator (strain JMP 134)).